The sequence spans 93 residues: Antitoxin EndoAI (93 aa).

This sequence belongs to the MazE/EndoAI family. In terms of assembly, homodimer, forms a heterohexamer composed of alternating toxin and antitoxin homodimers which inhibits the toxin's endoribonuclease activity. Antitoxin prevents RNA binding to the endoribonuclease.

Antitoxin component of a type II toxin-antitoxin (TA) system. Antitoxin that directly inhibits activity of EndoA in vitro. Upon expression in E.coli counteracts inhibitory effect of endoribonuclease EndoA. The EndoA-EndoAI complex does not seem to bind its own promoter. This chain is Antitoxin EndoAI, found in Bacillus subtilis (strain 168).